Consider the following 250-residue polypeptide: Probable dihydroorotate dehydrogenase B (NAD(+)), electron transfer subunit (250 aa).

The 89-residue stretch at 1 to 89 (MINLKIEENV…RGPYGNGFDV (89 aa)) folds into the FAD-binding FR-type domain. Positions 200, 205, 208, and 216 each coordinate [2Fe-2S] cluster.

It belongs to the PyrK family. Heterotetramer of 2 PyrK and 2 PyrD type B subunits. [2Fe-2S] cluster serves as cofactor. It depends on FAD as a cofactor.

Its pathway is pyrimidine metabolism; UMP biosynthesis via de novo pathway; orotate from (S)-dihydroorotate (NAD(+) route): step 1/1. Its function is as follows. Responsible for channeling the electrons from the oxidation of dihydroorotate from the FMN redox center in the PyrD type B subunit to the ultimate electron acceptor NAD(+). The sequence is that of Probable dihydroorotate dehydrogenase B (NAD(+)), electron transfer subunit from Thermoplasma volcanium (strain ATCC 51530 / DSM 4299 / JCM 9571 / NBRC 15438 / GSS1).